The following is a 545-amino-acid chain: E3 ubiquitin-protein ligase ipaH9.8 (545 aa).

An interaction with target proteins region spans residues 1 to 242 (MLPINNNFSL…YHGPRIYFSM (242 aa)). LRR repeat units follow at residues 57-77 (NSDE…NLPA), 78-99 (QITL…PVTL), 100-117 (KKLY…VLPP), 118-139 (ALES…PDSL), 140-157 (LTMN…SLPQ), 158-179 (ALKN…SEGN), 182-203 (VVRE…ILNL), and 205-228 (NECS…QRLT). The segment at 243–250 (SDGQQNTL) is linker. The interval 251–545 (HRPLADAVTA…SENGSQLHHS (295 aa)) is E3 ubiquitin-protein ligase catalytic domain. Positions 253 to 545 (PLADAVTAWF…SENGSQLHHS (293 aa)) constitute an NEL domain. Catalysis depends on cysteine 337, which acts as the Glycyl thioester intermediate.

The protein belongs to the LRR-containing bacterial E3 ligase family. As to quaternary structure, also interacts with human and mouse U2AF1 (U2AF35). In terms of processing, ubiquitinated in the presence of host E1 ubiquitin-activating enzyme, E2 ubiquitin-conjugating enzyme and ubiquitin.

The protein resides in the secreted. Its subcellular location is the host cytoplasm. It localises to the host nucleus. The enzyme catalyses S-ubiquitinyl-[E2 ubiquitin-conjugating enzyme]-L-cysteine + [acceptor protein]-L-lysine = [E2 ubiquitin-conjugating enzyme]-L-cysteine + N(6)-ubiquitinyl-[acceptor protein]-L-lysine.. Exists in an autoinhibited state in the absence of substrate protein, due to interactions of the leucine-rich repeats with NEL domain. Is activated upon binding to a substrate protein. Its function is as follows. Effector E3 ubiquitin ligase that interferes with host's ubiquitination pathway and modulates the acute inflammatory responses, thus facilitating bacterial colonization within the host cell. Interacts with IKBKG (NEMO) and TNIP1 (ABIN-1), a ubiquitin-binding adapter protein, which results in TNIP1-dependent 'Lys-27'-linked polyubiquitination of IKBKG. Consequently, polyubiquitinated IKBKG undergoes proteasome-dependent degradation, which perturbs NF-kappa-B activation during bacterial infection. Mediates polyubiquitination of host U2AF1, leading to its proteasomal degradation. Catalyzes 'Lys-48'-linked polyubiquitination and subsequent degradation of a subset of host guanylate-binding proteins (GBP1, GBP2, GBP4 and GBP6), thereby suppressing host cell defense. In contrast, host GBP3 and GBP7 are not ubiquitinated by IpaH9.8. Uses UBE2D2 (UBCH5B) as an E2 ubiquitin-conjugating enzyme. The polypeptide is E3 ubiquitin-protein ligase ipaH9.8 (ipaH9.8) (Shigella sonnei (strain Ss046)).